Reading from the N-terminus, the 707-residue chain is Lipase maturation factor 2 (707 aa).

10 helical membrane passes run 10–30, 78–98, 102–122, 126–146, 158–178, 220–240, 256–276, 309–329, 358–378, and 395–415; these read AFLW…YVQI, MELI…FSCL, LVFL…QVFL, WDSL…LHAM, GVTF…SGVV, FSVV…FLPF, ILII…VLCC, LVSL…VKYF, ITFP…LKGM, and LQWL…LVPY. Asparagine 483 is a glycosylation site (N-linked (GlcNAc...) asparagine). The chain crosses the membrane as a helical span at residues 634 to 654; the sequence is LLLHSFIFGIFTIYFLQAMFG. A disordered region spans residues 661 to 707; it reads VAKQRHSMPPNEKKKQKPNSGQGESASSKSSGHGTDTVRRNKKNEKS. The span at 680–694 shows a compositional bias: low complexity; the sequence is SGQGESASSKSSGHG. Over residues 696 to 707 the composition is skewed to basic and acidic residues; sequence DTVRRNKKNEKS.

It belongs to the lipase maturation factor family.

It is found in the endoplasmic reticulum membrane. Functionally, involved in the maturation of specific proteins in the endoplasmic reticulum. In Xenopus laevis (African clawed frog), this protein is Lipase maturation factor 2 (lmf2).